The chain runs to 500 residues: L-arabinose isomerase (500 aa).

Mn(2+) contacts are provided by Glu306, Glu333, His350, and His450.

It belongs to the arabinose isomerase family. As to quaternary structure, homohexamer. Requires Mn(2+) as cofactor.

The enzyme catalyses beta-L-arabinopyranose = L-ribulose. It functions in the pathway carbohydrate degradation; L-arabinose degradation via L-ribulose; D-xylulose 5-phosphate from L-arabinose (bacterial route): step 1/3. Its function is as follows. Catalyzes the conversion of L-arabinose to L-ribulose. The polypeptide is L-arabinose isomerase (Yersinia pseudotuberculosis serotype O:3 (strain YPIII)).